The sequence spans 352 residues: Schlafen-like protein 4 (352 aa).

Residues 87 to 235 (FEYQSNFSEV…SDKVYQISSG (149 aa)) are SLFN-like fold. Residues 326 to 343 (IQNIGWIFFGTALSCCIY) traverse the membrane as a helical segment.

The protein belongs to the Schlafen family. In terms of assembly, component of the PUCH (precursor of 21U RNA 5'-end cleavage holoenzyme) complex; consisting of tofu-1, tofu-2 and either slfl-3 or slfl-4.

Its subcellular location is the membrane. In terms of biological role, component of the trimeric PUCH (precursor of 21U RNA 5'-end cleavage holoenzyme) complex, that acts as an endoribonuclease processing the 5'-end of precursor Piwi-interacting RNAs (piRNAs). The PUCH complex consists of tofu-1, tofu-2 and either slfl-3 or slfl-4, where tofu-2 exhibits endoribonuclease activity. PUCH-mediated processing strictly requires a 7-methyl-G cap (m7 G-cap) and an uracil at position three (U3). PUCH also exhibits a strict bias for piRNA precursors with an A or G at position 1. Mature piRNA production is enhanced by the interaction of PUCH with the PETISCO complex, which is stabilizing piRNA precursors and allows their processing by PUCH. In Caenorhabditis elegans, this protein is Schlafen-like protein 4.